Here is a 54-residue protein sequence, read N- to C-terminus: UPF0391 membrane protein pRL90066 (54 aa).

2 consecutive transmembrane segments (helical) span residues 5 to 25 and 28 to 48; these read ALVFLVVALIAGVLGFGGIAG and ASIAQVLFFIFLVLFVVSLVM.

It belongs to the UPF0391 family.

It is found in the cell membrane. The chain is UPF0391 membrane protein pRL90066 from Rhizobium johnstonii (strain DSM 114642 / LMG 32736 / 3841) (Rhizobium leguminosarum bv. viciae).